Consider the following 37-residue polypeptide: Cytochrome b6-f complex subunit 5 (37 aa).

Residues 5–25 (LLSGIVLGLIPITLAGLFVTA) traverse the membrane as a helical segment.

The protein belongs to the PetG family. As to quaternary structure, the 4 large subunits of the cytochrome b6-f complex are cytochrome b6, subunit IV (17 kDa polypeptide, PetD), cytochrome f and the Rieske protein, while the 4 small subunits are PetG, PetL, PetM and PetN. The complex functions as a dimer.

It is found in the plastid. Its subcellular location is the chloroplast thylakoid membrane. Functionally, component of the cytochrome b6-f complex, which mediates electron transfer between photosystem II (PSII) and photosystem I (PSI), cyclic electron flow around PSI, and state transitions. PetG is required for either the stability or assembly of the cytochrome b6-f complex. This is Cytochrome b6-f complex subunit 5 from Chara vulgaris (Common stonewort).